A 384-amino-acid chain; its full sequence is Probable inactive linolenate hydroperoxide lyase (384 aa).

Residue Cys346 participates in heme binding.

Belongs to the cytochrome P450 family. It depends on heme as a cofactor. As to expression, expressed in roots, leaves, flowers and siliques.

The protein is Probable inactive linolenate hydroperoxide lyase of Arabidopsis thaliana (Mouse-ear cress).